The chain runs to 702 residues: Lipase maturation factor 2 (702 aa).

The next 8 helical transmembrane spans lie at 10–30 (LFLQGVAAVYLFAFASLYTQI), 75–95 (AQGLDLLTLLGTVLALGALLL), 164–184 (DLPFWLVRWLLFRLMFASGVV), 226–246 (LSVVATFLIEIAVPPLFFAPI), 259–279 (LLQVLIIITGNYNFFNLLTLV), 316–336 (LLLELTVYGLLAYGTVYYFGL), 363–383 (VTLPTVWLGTASLAWELLVVL), and 398–418 (AGIQLSVLGTATVALFLISLV). An N-linked (GlcNAc...) asparagine glycan is attached at Asn-488. A helical membrane pass occupies residues 636–656 (ILLWGLFGAVVAIRVVQTLLA). Residues 660–702 (LQSSKQTREEKRKQTSKKDSRAASEQAAANSNSRDSWAPRRKK) form a disordered region. Over residues 665 to 681 (QTREEKRKQTSKKDSRA) the composition is skewed to basic and acidic residues. The span at 682–693 (ASEQAAANSNSR) shows a compositional bias: low complexity.

This sequence belongs to the lipase maturation factor family.

It localises to the endoplasmic reticulum membrane. Its function is as follows. Involved in the maturation of specific proteins in the endoplasmic reticulum. May be required for maturation and transport of active lipoprotein lipase (LPL) through the secretory pathway. The polypeptide is Lipase maturation factor 2 (Lmf2) (Mus musculus (Mouse)).